Consider the following 407-residue polypeptide: Transmembrane protein 184B (407 aa).

The interval M1 to S25 is disordered. Residues A9 to S25 are compositionally biased toward low complexity. The next 7 helical transmembrane spans lie at F40 to I60, I84 to N104, L121 to M141, L178 to G198, V214 to F234, F249 to L269, and V290 to L310. Residues T369–N395 are disordered. Residues S388, S402, and S403 each carry the phosphoserine modification.

It belongs to the TMEM184 family.

Its subcellular location is the membrane. Functionally, may activate the MAP kinase signaling pathway. This chain is Transmembrane protein 184B (TMEM184B), found in Homo sapiens (Human).